A 399-amino-acid polypeptide reads, in one-letter code: Tyrosine--tRNA ligase 2 (399 aa).

Positions 43–52 (PTAPDLHLGH) match the 'HIGH' region motif. The 'KMSKS' region signature appears at 227 to 231 (KMSKS). Lysine 230 is an ATP binding site. Residues 338–398 (ITLLDLCSVA…IGKRYKFRIG (61 aa)) form the S4 RNA-binding domain.

Belongs to the class-I aminoacyl-tRNA synthetase family. TyrS type 2 subfamily. Homodimer.

The protein resides in the cytoplasm. The catalysed reaction is tRNA(Tyr) + L-tyrosine + ATP = L-tyrosyl-tRNA(Tyr) + AMP + diphosphate + H(+). Catalyzes the attachment of tyrosine to tRNA(Tyr) in a two-step reaction: tyrosine is first activated by ATP to form Tyr-AMP and then transferred to the acceptor end of tRNA(Tyr). The sequence is that of Tyrosine--tRNA ligase 2 from Photorhabdus laumondii subsp. laumondii (strain DSM 15139 / CIP 105565 / TT01) (Photorhabdus luminescens subsp. laumondii).